The sequence spans 82 residues: Small ribosomal subunit protein bS16 (82 aa).

The protein belongs to the bacterial ribosomal protein bS16 family.

The chain is Small ribosomal subunit protein bS16 from Rippkaea orientalis (strain PCC 8801 / RF-1) (Cyanothece sp. (strain PCC 8801)).